We begin with the raw amino-acid sequence, 170 residues long: Putative pre-16S rRNA nuclease (170 aa).

The interval 1–29 (MVAASHRSPDRPGDPEGLEPGTGRGRRLG) is disordered.

This sequence belongs to the YqgF nuclease family.

It localises to the cytoplasm. Functionally, could be a nuclease involved in processing of the 5'-end of pre-16S rRNA. This chain is Putative pre-16S rRNA nuclease, found in Mycobacterium ulcerans (strain Agy99).